The following is a 56-amino-acid chain: Large ribosomal subunit protein bL33 (56 aa).

The segment covering 1 to 12 has biased composition (basic and acidic residues); the sequence is MASKGGRDKIKL. The segment at 1–28 is disordered; the sequence is MASKGGRDKIKLESTAGTGHFYTTTKNK. Positions 15-25 are enriched in polar residues; the sequence is TAGTGHFYTTT.

It belongs to the bacterial ribosomal protein bL33 family.

The polypeptide is Large ribosomal subunit protein bL33 (Cupriavidus necator (strain ATCC 17699 / DSM 428 / KCTC 22496 / NCIMB 10442 / H16 / Stanier 337) (Ralstonia eutropha)).